We begin with the raw amino-acid sequence, 27 residues long: Secretin (27 aa).

Val27 bears the Valine amide mark.

This sequence belongs to the glucagon family.

The protein localises to the secreted. Its function is as follows. Hormone involved in different processes, such as regulation of the pH of the duodenal content, food intake and water homeostasis. Exerts its biological effects by binding to secretin receptor (SCTR), a G-protein coupled receptor expressed in the basolateral domain of several cells. Acts as a key gastrointestinal hormone by regulating the pH of the duodenal content. Secreted by S cells of the duodenum in the crypts of Lieberkuehn and regulates the pH of the duodenum by (1) inhibiting the secretion of gastric acid from the parietal cells of the stomach and (2) stimulating the production of bicarbonate (NaHCO(3)) from the ductal cells of the pancreas. Production of bicarbonate is essential to neutralize the pH and ensure no damage is done to the small intestine by the gastric acid. In addition to regulating the pH of the duodenal content, plays a central role in diet induced thermogenesis: acts as a non-sympathetic brown fat (BAT) activator mediating prandial thermogenesis, which consequentially induces satiation. Mechanistically, secretin released by the gut after a meal binds to secretin receptor (SCTR) in brown adipocytes, activating brown fat thermogenesis by stimulating lipolysis, which is sensed in the brain and promotes satiation. Also able to stimulate lipolysis in white adipocytes. Also plays an important role in cellular osmoregulation: released into the systemic circulation in response to hyperosmolality and acts at different levels in the hypothalamus, pituitary and kidney to regulate water homeostasis. Also plays a role in the central nervous system, possibly by acting as a neuropeptide hormone: required for hippocampal synaptic function and neural progenitor cells maintenance. The polypeptide is Secretin (Bos taurus (Bovine)).